The primary structure comprises 122 residues: Gene 20 protein (122 aa).

The chain is Gene 20 protein (20) from Mycobacterium phage D29 (Mycobacteriophage D29).